A 248-amino-acid chain; its full sequence is Protein STPG4 (248 aa).

In terms of assembly, interacts with histone H3. Interacts with histone H4.

Its subcellular location is the cytoplasm. It is found in the nucleus. In terms of biological role, maternal factor that plays a role in epigenetic chromatin reprogramming during early development of the zygote. Involved in the regulation of gametic DNA demethylation by inducing the conversion of the modified genomic base 5-methylcytosine (5mC) into 5-hydroxymethylcytosine (5hmC). The chain is Protein STPG4 from Homo sapiens (Human).